The chain runs to 195 residues: ATP-dependent Clp protease proteolytic subunit (195 aa).

Serine 102 (nucleophile) is an active-site residue. Histidine 125 is a catalytic residue.

The protein belongs to the peptidase S14 family. As to quaternary structure, component of the chloroplastic Clp protease core complex.

Its subcellular location is the plastid. The protein localises to the chloroplast stroma. The enzyme catalyses Hydrolysis of proteins to small peptides in the presence of ATP and magnesium. alpha-casein is the usual test substrate. In the absence of ATP, only oligopeptides shorter than five residues are hydrolyzed (such as succinyl-Leu-Tyr-|-NHMec, and Leu-Tyr-Leu-|-Tyr-Trp, in which cleavage of the -Tyr-|-Leu- and -Tyr-|-Trp bonds also occurs).. Its function is as follows. Cleaves peptides in various proteins in a process that requires ATP hydrolysis. Has a chymotrypsin-like activity. Plays a major role in the degradation of misfolded proteins. This chain is ATP-dependent Clp protease proteolytic subunit, found in Phaseolus vulgaris (Kidney bean).